Reading from the N-terminus, the 148-residue chain is Putative antiporter subunit mnhG2 (148 aa).

3 helical membrane-spanning segments follow: residues 11 to 31, 51 to 71, and 72 to 92; these read IAAI…IGLI, VLLT…YLSV, and RLIL…HLIS. A disordered region spans residues 125-148; the sequence is EQLKQRAHEREERRRKTYEKEHDY. Residues 127-148 show a composition bias toward basic and acidic residues; it reads LKQRAHEREERRRKTYEKEHDY.

It belongs to the CPA3 antiporters (TC 2.A.63) subunit G family. May form a heterooligomeric complex that consists of seven subunits: mnhA2, mnhB2, mnhC2, mnhD2, mnhE2, mnhF2 and mnhG2.

It is found in the cell membrane. The protein is Putative antiporter subunit mnhG2 (mnhG2) of Staphylococcus saprophyticus subsp. saprophyticus (strain ATCC 15305 / DSM 20229 / NCIMB 8711 / NCTC 7292 / S-41).